The following is a 648-amino-acid chain: Pesticidal crystal protein Cry19Aa (648 aa).

This sequence belongs to the delta endotoxin family.

In terms of biological role, promotes colloidosmotic lysis by binding to the midgut epithelial cells of mosquitos. The sequence is that of Pesticidal crystal protein Cry19Aa (cry19Aa) from Bacillus thuringiensis subsp. jegathesan.